A 312-amino-acid chain; its full sequence is Cell division control protein 2 homolog D (312 aa).

Residues phenylalanine 14–phenylalanine 304 enclose the Protein kinase domain. Residues valine 20 to valine 28 and lysine 43 each bind ATP. Phosphothreonine is present on threonine 24. A Phosphotyrosine modification is found at tyrosine 25. The active-site Proton acceptor is aspartate 145. Threonine 179 is modified (phosphothreonine; by CAK).

Belongs to the protein kinase superfamily. CMGC Ser/Thr protein kinase family. CDC2/CDKX subfamily.

It carries out the reaction L-seryl-[protein] + ATP = O-phospho-L-seryl-[protein] + ADP + H(+). It catalyses the reaction L-threonyl-[protein] + ATP = O-phospho-L-threonyl-[protein] + ADP + H(+). The catalysed reaction is [DNA-directed RNA polymerase] + ATP = phospho-[DNA-directed RNA polymerase] + ADP + H(+). In terms of biological role, plays a key role in the control of the eukaryotic cell cycle. The polypeptide is Cell division control protein 2 homolog D (CDC2D) (Antirrhinum majus (Garden snapdragon)).